We begin with the raw amino-acid sequence, 91 residues long: Small ribosomal subunit protein uS19 (91 aa).

The protein belongs to the universal ribosomal protein uS19 family.

Functionally, protein S19 forms a complex with S13 that binds strongly to the 16S ribosomal RNA. The polypeptide is Small ribosomal subunit protein uS19 (Amoebophilus asiaticus (strain 5a2)).